The chain runs to 318 residues: Mitochondrial thiamine pyrophosphate carrier (318 aa).

3 Solcar repeats span residues 13–106 (ISNV…LTEL), 116–202 (RDFS…LKRA), and 214–309 (NGNF…FCNF). The chain crosses the membrane as a helical span at residues 19–39 (AVAGSVSGLVTRVLISPLDVI). Ser-51 bears the Phosphoserine mark. Transmembrane regions (helical) follow at residues 87 to 107 (LLSI…TELV), 122 to 142 (FLCG…VDVL), 173 to 193 (VFYK…GFQF), and 220 to 240 (LLCG…LDLF). Positions 241–246 (KKRLQV) match the Substrate recognition motif. The chain crosses the membrane as a helical span at residues 293–313 (ALSTGLVFFWYELFCNFFHHM).

The protein belongs to the mitochondrial carrier (TC 2.A.29) family.

Its subcellular location is the mitochondrion membrane. It catalyses the reaction thiamine phosphate(out) + thiamine diphosphate(in) = thiamine phosphate(in) + thiamine diphosphate(out). Its function is as follows. Mitochondrial transporter mediating uptake of thiamine diphosphate into mitochondria. It is not clear if the antiporter activity is affected by the membrane potential or by the proton electrochemical gradient. This Bos taurus (Bovine) protein is Mitochondrial thiamine pyrophosphate carrier (SLC25A19).